Reading from the N-terminus, the 3387-residue chain is Genome polyprotein (3387 aa).

At 1 to 100 (MNQRKKVARP…LNILNGRKRS (100 aa)) the chain is on the cytoplasmic side. A hydrophobic; homodimerization of capsid protein C region spans residues 36-71 (LFSGKGPLRMVLAFITFLRVLSIPPTAGILKRWGQL). A propeptide spans 100–113 (STITLLCLIPTVMA) (ER anchor for the capsid protein C, removed in mature form by serine protease NS3). The helical transmembrane segment at 101 to 117 (TITLLCLIPTVMAFHLS) threads the bilayer. Residues 118–237 (TRDGEPLMIV…GAWKHAQRVE (120 aa)) lie on the Extracellular side of the membrane. N-linked (GlcNAc...) asparagine; by host glycosylation is present at N182. The helical transmembrane segment at 238-258 (SWILRNPGFALLAGFMAYMIG) threads the bilayer. The Cytoplasmic segment spans residues 259–265 (QTGIQRT). The helical transmembrane segment at 266-279 (VFFILMMLVAPSYG) threads the bilayer. The Extracellular segment spans residues 280-725 (MRCVGVGNRD…HQVFGSVYTT (446 aa)). 4 disulfides stabilise this stretch: C282/C309, C339/C400, C353/C384, and C371/C395. N346 carries N-linked (GlcNAc...) asparagine; by host glycosylation. The segment at 377–390 (DRGWGNGCGLFGKG) is fusion peptide. N432 carries an N-linked (GlcNAc...) asparagine; by host glycan. 2 disulfide bridges follow: C464-C564 and C581-C612. A helical transmembrane segment spans residues 726–746 (MFGGVSWMVRILIGLLVLWIG). The Cytoplasmic portion of the chain corresponds to 747–753 (TNSRNTS). A helical membrane pass occupies residues 754–774 (MAMSCIAVGGITLFLGFTVHA). Topologically, residues 775 to 1194 (DMGCAVSWSG…MLGDTMSGRM (420 aa)) are extracellular. Cystine bridges form between C778/C789, C829/C917, C953/C997, C1054/C1103, C1065/C1087, and C1086/C1090. N-linked (GlcNAc...) asparagine; by host glycosylation is found at N904 and N981. Residues 1195 to 1218 (GGQIHLAIMAVFKMSPGYVLGIFL) traverse the membrane as a helical segment. Topologically, residues 1219-1224 (RKLTSR) are lumenal. A helical membrane pass occupies residues 1225–1243 (ETALMVIGMAMTTVLSIPH). Topologically, residues 1244 to 1267 (DLMEFIDGISLGLILLKMVTHFDN) are cytoplasmic. The helical transmembrane segment at 1268–1288 (TQVGTLALSLTFIKSTMPLVM) threads the bilayer. A1289 is a topological domain (lumenal). The helical transmembrane segment at 1290-1308 (WRTIMAVLFVVTLIPLCRT) threads the bilayer. Residues 1309-1316 (SCLQKQSH) lie on the Lumenal side of the membrane. Residues 1317–1337 (WVEITALILGAQALPVYLMTL) form a helical membrane-spanning segment. Residues 1338–1345 (MKGASKRS) are Cytoplasmic-facing. The helical transmembrane segment at 1346 to 1366 (WPLNEGIMAVGLVSLLGSALL) threads the bilayer. The Lumenal portion of the chain corresponds to 1367 to 1369 (KND). A helical transmembrane segment spans residues 1370 to 1390 (VPLAGPMVAGGLLLAAYVMSG). Residues 1391–1437 (SSADLSLEKAANVQWDEMADITGSSPIIEVKQDEDGSFSIRDVEETN) are Cytoplasmic-facing. The tract at residues 1397-1436 (LEKAANVQWDEMADITGSSPIIEVKQDEDGSFSIRDVEET) is interacts with and activates NS3 protease. An intramembrane region (helical) is located at residues 1438-1458 (MITLLVKLALITVSGLYPLAI). The Cytoplasmic portion of the chain corresponds to 1459–2143 (PVTMTLWYMW…QHALNELPES (685 aa)). Residues 1475-1652 (SGALWDVPSP…ERIGEPDYEV (178 aa)) enclose the Peptidase S7 domain. Catalysis depends on charge relay system; for serine protease NS3 activity residues H1525, D1549, and S1609. A Helicase ATP-binding domain is found at 1654–1810 (EDIFRKKRLT…QSNSPIEDIE (157 aa)). Positions 1658–1661 (RKKR) are important for RNA-binding. 1667–1674 (LHPGAGKT) serves as a coordination point for ATP. A DEAH box motif is present at residues 1758-1761 (DEAH). The region spanning 1820-1987 (TGFDWITDYQ…IIPTLFGPER (168 aa)) is the Helicase C-terminal domain. The residue at position 1862 (K1862) is an N6-acetyllysine; by host. A helical membrane pass occupies residues 2144-2164 (LETLMLVALLGAMTAGIFLFF). At 2165–2169 (MQGKG) the chain is on the lumenal side. An intramembrane region (helical) is located at residues 2170-2190 (IGKLSMGLIAIAVASGLLWVA). A topological domain (lumenal) is located at residue E2191. Residues 2192–2212 (IQPQWIAASIILEFFLMVLLV) form a helical membrane-spanning segment. At 2213–2225 (PEPEKQRTPQDNQ) the chain is on the cytoplasmic side. Residues 2226-2246 (LIYVILTILTIIALVAANEMG) traverse the membrane as a helical segment. Residues 2247-2270 (LIEKTKTDFGFYQAKTETTILDVD) lie on the Lumenal side of the membrane. Positions 2271–2291 (LRPASAWTLYAVATTILTPML) form an intramembrane region, helical. Topologically, residues 2292–2301 (RHTIENTSAN) are lumenal. 2 N-linked (GlcNAc...) asparagine; by host glycosylation sites follow: N2297 and N2301. An intramembrane region (helical) is located at residues 2302 to 2322 (LSLAAIANQAAVLMGLGKGWP). At 2323 to 2343 (LHRMDLGVPLLAMGCYSQVNP) the chain is on the lumenal side. A helical membrane pass occupies residues 2344-2364 (TTLTASLVMLLVHYAIIGPGL). The Cytoplasmic portion of the chain corresponds to 2365-2409 (QAKATREAQKRTAAGIMKNPTVDGITVIDLEPISYDPKFEKQLGQ). Residues 2410 to 2430 (VMLLVLCAGQLLLMRTTWAFC) traverse the membrane as a helical segment. At 2431-2455 (EVLTLATGPILTLWEGNPGRFWNTT) the chain is on the lumenal side. An N-linked (GlcNAc...) asparagine; by host glycan is attached at N2453. A helical transmembrane segment spans residues 2456–2476 (IAVSTANIFRGSYLAGAGLAF). The Cytoplasmic segment spans residues 2477–3387 (SLIKNAQTPR…SAHFESEGVL (911 aa)). Residues 2489-2751 (TGTTGETLGE…DADLGAGTRS (263 aa)) form the mRNA cap 0-1 NS5-type MT domain. S2543 serves as a coordination point for S-adenosyl-L-methionine. Position 2543 is a phosphoserine (S2543). K2548 functions as the For 2'-O-MTase activity in the catalytic mechanism. Residues 2564 to 2567 (VVDL) carry the SUMO-interacting motif motif. The S-adenosyl-L-methionine site is built by G2573, W2574, T2591, K2592, D2618, and V2619. Residue D2633 is the For 2'-O-MTase activity of the active site. An S-adenosyl-L-methionine-binding site is contributed by I2634. Active-site for 2'-O-MTase activity residues include K2668 and E2704. Residue Y2706 coordinates S-adenosyl-L-methionine. The Zn(2+) site is built by E2925, H2929, C2934, and C2937. Positions 3016–3166 (LIYADDTAGW…PLDERFSTSL (151 aa)) constitute a RdRp catalytic domain. H3200, C3216, and C3335 together coordinate Zn(2+).

The protein in the N-terminal section; belongs to the class I-like SAM-binding methyltransferase superfamily. mRNA cap 0-1 NS5-type methyltransferase family. Homodimer. Interacts (via N-terminus) with host EXOC1 (via C-terminus); this interaction results in EXOC1 degradation through the proteasome degradation pathway. As to quaternary structure, forms heterodimers with envelope protein E in the endoplasmic reticulum and Golgi. In terms of assembly, homodimer; in the endoplasmic reticulum and Golgi. Interacts with protein prM. Interacts with non-structural protein 1. Homodimer; Homohexamer when secreted. Interacts with envelope protein E. As to quaternary structure, interacts (via N-terminus) with serine protease NS3. In terms of assembly, forms a heterodimer with serine protease NS3. May form homooligomers. Forms a heterodimer with NS2B. Interacts with NS4B. Interacts with unphosphorylated RNA-directed RNA polymerase NS5; this interaction stimulates RNA-directed RNA polymerase NS5 guanylyltransferase activity. Interacts with host SHFL. As to quaternary structure, interacts with host MAVS; this interaction inhibits the synthesis of IFN-beta. Interacts with host SHFL. Interacts with host AUP1; the interaction occurs in the presence of Dengue virus NS4B and induces lipophagy which facilitates production of virus progeny particles. In terms of assembly, interacts with serine protease NS3. Homodimer. Interacts with host STAT2; this interaction inhibits the phosphorylation of the latter, and, when all viral proteins are present (polyprotein), targets STAT2 for degradation. Interacts with serine protease NS3. Interacts with host PAF1 complex; the interaction may prevent the recruitment of the PAF1 complex to interferon-responsive genes, and thus reduces the immune response. Post-translationally, specific enzymatic cleavages in vivo yield mature proteins. Cleavages in the lumen of endoplasmic reticulum are performed by host signal peptidase, whereas cleavages in the cytoplasmic side are performed by serine protease NS3. Signal cleavage at the 2K-4B site requires a prior NS3 protease-mediated cleavage at the 4A-2K site. In terms of processing, cleaved in post-Golgi vesicles by a host furin, releasing the mature small envelope protein M, and peptide pr. This cleavage is incomplete as up to 30% of viral particles still carry uncleaved prM. N-glycosylated. Post-translationally, N-glycosylated. The excreted form is glycosylated and this is required for efficient secretion of the protein from infected cells. In terms of processing, acetylated by host KAT5. Acetylation modulates NS3 RNA-binding and unwinding activities and plays an important positive role for viral replication. Sumoylation of RNA-directed RNA polymerase NS5 increases NS5 protein stability allowing proper viral RNA replication. Post-translationally, phosphorylated on serines residues. This phosphorylation may trigger NS5 nuclear localization.

It localises to the virion. The protein resides in the host nucleus. The protein localises to the host cytoplasm. It is found in the host perinuclear region. Its subcellular location is the secreted. It localises to the virion membrane. The protein resides in the host endoplasmic reticulum membrane. The protein localises to the host mitochondrion. It catalyses the reaction Selective hydrolysis of -Xaa-Xaa-|-Yaa- bonds in which each of the Xaa can be either Arg or Lys and Yaa can be either Ser or Ala.. The enzyme catalyses RNA(n) + a ribonucleoside 5'-triphosphate = RNA(n+1) + diphosphate. The catalysed reaction is a ribonucleoside 5'-triphosphate + H2O = a ribonucleoside 5'-diphosphate + phosphate + H(+). It carries out the reaction ATP + H2O = ADP + phosphate + H(+). It catalyses the reaction a 5'-end (5'-triphosphoguanosine)-ribonucleoside in mRNA + S-adenosyl-L-methionine = a 5'-end (N(7)-methyl 5'-triphosphoguanosine)-ribonucleoside in mRNA + S-adenosyl-L-homocysteine. The enzyme catalyses a 5'-end (N(7)-methyl 5'-triphosphoguanosine)-ribonucleoside in mRNA + S-adenosyl-L-methionine = a 5'-end (N(7)-methyl 5'-triphosphoguanosine)-(2'-O-methyl-ribonucleoside) in mRNA + S-adenosyl-L-homocysteine + H(+). In terms of biological role, plays a role in virus budding by binding to the cell membrane and gathering the viral RNA into a nucleocapsid that forms the core of a mature virus particle. During virus entry, may induce genome penetration into the host cytoplasm after hemifusion induced by the surface proteins. Can migrate to the cell nucleus where it modulates host functions. Overcomes the anti-viral effects of host EXOC1 by sequestering and degrading the latter through the proteasome degradation pathway. Inhibits RNA silencing by interfering with host Dicer. Functionally, prevents premature fusion activity of envelope proteins in trans-Golgi by binding to envelope protein E at pH6.0. After virion release in extracellular space, gets dissociated from E dimers. Its function is as follows. Acts as a chaperone for envelope protein E during intracellular virion assembly by masking and inactivating envelope protein E fusion peptide. prM is the only viral peptide matured by host furin in the trans-Golgi network probably to avoid catastrophic activation of the viral fusion activity in acidic Golgi compartment prior to virion release. prM-E cleavage is inefficient, and many virions are only partially matured. These uncleaved prM would play a role in immune evasion. In terms of biological role, may play a role in virus budding. Exerts cytotoxic effects by activating a mitochondrial apoptotic pathway through M ectodomain. May display a viroporin activity. Binds to host cell surface receptor and mediates fusion between viral and cellular membranes. Envelope protein is synthesized in the endoplasmic reticulum in the form of heterodimer with protein prM. They play a role in virion budding in the ER, and the newly formed immature particle is covered with 60 spikes composed of heterodimer between precursor prM and envelope protein E. The virion is transported to the Golgi apparatus where the low pH causes dissociation of PrM-E heterodimers and formation of E homodimers. prM-E cleavage is inefficient, and many virions are only partially matured. These uncleaved prM would play a role in immune evasion. Functionally, involved in immune evasion, pathogenesis and viral replication. Once cleaved off the polyprotein, is targeted to three destinations: the viral replication cycle, the plasma membrane and the extracellular compartment. Essential for viral replication. Required for formation of the replication complex and recruitment of other non-structural proteins to the ER-derived membrane structures. Excreted as a hexameric lipoparticle that plays a role against host immune response. Antagonizing the complement function. Binds to the host macrophages and dendritic cells. Inhibits signal transduction originating from Toll-like receptor 3 (TLR3). Its function is as follows. Disrupts the host endothelial glycocalyx layer of host pulmonary microvascular endothelial cells, inducing degradation of sialic acid and shedding of heparan sulfate proteoglycans. NS1 induces expression of sialidases, heparanase, and activates cathepsin L, which activates heparanase via enzymatic cleavage. These effects are probably linked to the endothelial hyperpermeability observed in severe dengue disease. In terms of biological role, component of the viral RNA replication complex that functions in virion assembly and antagonizes the host immune response. Required cofactor for the serine protease function of NS3. May have membrane-destabilizing activity and form viroporins. Functionally, displays three enzymatic activities: serine protease, NTPase and RNA helicase. NS3 serine protease, in association with NS2B, performs its autocleavage and cleaves the polyprotein at dibasic sites in the cytoplasm: C-prM, NS2A-NS2B, NS2B-NS3, NS3-NS4A, NS4A-2K and NS4B-NS5. NS3 RNA helicase binds RNA and unwinds dsRNA in the 3' to 5' direction. Its function is as follows. Regulates the ATPase activity of the NS3 helicase activity. NS4A allows NS3 helicase to conserve energy during unwinding. Plays a role in the inhibition of the host innate immune response. Interacts with host MAVS and thereby prevents the interaction between RIGI and MAVS. In turn, IFN-beta production is impaired. Interacts with host AUP1 which mediates induction of lipophagy in host cells and facilitates production of virus progeny particles. In terms of biological role, functions as a signal peptide for NS4B and is required for the interferon antagonism activity of the latter. Induces the formation of ER-derived membrane vesicles where the viral replication takes place. Inhibits interferon (IFN)-induced host STAT1 phosphorylation and nuclear translocation, thereby preventing the establishment of cellular antiviral state by blocking the IFN-alpha/beta pathway. Functionally, replicates the viral (+) and (-) RNA genome, and performs the capping of genomes in the cytoplasm. NS5 methylates viral RNA cap at guanine N-7 and ribose 2'-O positions. Besides its role in RNA genome replication, also prevents the establishment of cellular antiviral state by blocking the interferon-alpha/beta (IFN-alpha/beta) signaling pathway. Inhibits host TYK2 and STAT2 phosphorylation, thereby preventing activation of JAK-STAT signaling pathway. May reduce immune responses by preventing the recruitment of the host PAF1 complex to interferon-responsive genes. This Dengue virus type 4 (strain Thailand/0348/1991) (DENV-4) protein is Genome polyprotein.